A 132-amino-acid polypeptide reads, in one-letter code: Small ribosomal subunit protein uS8 (132 aa).

This sequence belongs to the universal ribosomal protein uS8 family. As to quaternary structure, part of the 30S ribosomal subunit. Contacts proteins S5 and S12.

Its function is as follows. One of the primary rRNA binding proteins, it binds directly to 16S rRNA central domain where it helps coordinate assembly of the platform of the 30S subunit. In Francisella philomiragia subsp. philomiragia (strain ATCC 25017 / CCUG 19701 / FSC 153 / O#319-036), this protein is Small ribosomal subunit protein uS8.